The chain runs to 400 residues: ELAV-like protein 4 (400 aa).

The segment at 12–48 (TMEPQVSNGPTSNTSNGPSSNSRNCPSPMQTGAATDD) is disordered. Positions 18–33 (SNGPTSNTSNGPSSNS) are enriched in low complexity. Residues 34–44 (RNCPSPMQTGA) show a composition bias toward polar residues. 3 RRM domains span residues 51-158 (TNLI…YARP), 166-246 (ANLY…FANN), and 317-395 (WCIF…FKTN).

It belongs to the RRM elav family.

It localises to the cytoplasm. The protein localises to the perikaryon. The protein resides in the cell projection. It is found in the axon. Its subcellular location is the dendrite. It localises to the growth cone. In terms of biological role, RNA-binding protein that is involved in the post-transcriptional regulation of mRNAs. Plays a role in the regulation of mRNA stability, alternative splicing and translation. Binds to AU-rich element (ARE) sequences in the 3' untranslated region (3'UTR) of target mRNAs. Mainly plays a role in neuron-specific RNA processing. The polypeptide is ELAV-like protein 4 (elavl4) (Xenopus tropicalis (Western clawed frog)).